Reading from the N-terminus, the 90-residue chain is Putative transcript Y 12 protein (90 aa).

This Homo sapiens (Human) protein is Putative transcript Y 12 protein (TTTY12).